Consider the following 147-residue polypeptide: UPF0178 protein Nther_1836 (147 aa).

It belongs to the UPF0178 family.

In Natranaerobius thermophilus (strain ATCC BAA-1301 / DSM 18059 / JW/NM-WN-LF), this protein is UPF0178 protein Nther_1836.